The following is a 294-amino-acid chain: DEP domain-containing protein 4 (294 aa).

In terms of domain architecture, DEP spans 71–162 (LQAQVEIKRR…SNISLYRFLG (92 aa)).

The sequence is that of DEP domain-containing protein 4 (DEPDC4) from Homo sapiens (Human).